The chain runs to 199 residues: Recombination protein RecR (199 aa).

The segment at 58 to 73 (CSVCFTLSDTPVCAIC) adopts a C4-type zinc-finger fold. A Toprim domain is found at 81–176 (SLLCVVEGPT…TVTRIASGMP (96 aa)).

It belongs to the RecR family.

May play a role in DNA repair. It seems to be involved in an RecBC-independent recombinational process of DNA repair. It may act with RecF and RecO. This chain is Recombination protein RecR, found in Desulfosudis oleivorans (strain DSM 6200 / JCM 39069 / Hxd3) (Desulfococcus oleovorans).